A 489-amino-acid chain; its full sequence is Type II restriction enzyme Sau3AI (489 aa).

It depends on Mg(2+) as a cofactor.

The catalysed reaction is Endonucleolytic cleavage of DNA to give specific double-stranded fragments with terminal 5'-phosphates.. Its function is as follows. An E and P subtype restriction enzyme that recognizes the double-stranded sequence 5'-GATC-3' and cleaves before G-1. The protein is Type II restriction enzyme Sau3AI (sau3AIR) of Staphylococcus aureus.